Reading from the N-terminus, the 526-residue chain is Osmo-independent choline transporter BetT1 (526 aa).

Topologically, residues 1 to 17 are cytoplasmic; that stretch reads MWSKRDEQKTYPPIRLN. The helical transmembrane segment at 18–38 threads the bilayer; it reads PFVFWSSAISISIFGMLFVLF. Residues 39–56 lie on the Periplasmic side of the membrane; the sequence is PETSQHGLTWIQQQVNQL. The chain crosses the membrane as a helical span at residues 57-77; sequence FGWYYMLVIILSLGFVAWLAF. At 78-93 the chain is on the cytoplasmic side; sequence SQVGNIPLGKAQDKPE. A helical transmembrane segment spans residues 94–114; that stretch reads FGYLVWTSMLFSAGIGIALLY. The Periplasmic segment spans residues 115 to 148; that stretch reads YGVAEPVDHFLRPPEGQGGTVEAAQNAMMYSFLH. The helical transmembrane segment at 149–169 threads the bilayer; the sequence is WGIHGWVLYALVGVTLGYFAF. Over 170–200 the chain is Cytoplasmic; that stretch reads RRDLPLALRSALYPIFGERIHGLVGHMVDGF. The helical transmembrane segment at 201–221 threads the bilayer; the sequence is GILATIISLVTNLGIGALVMI. Residues 222–236 are Periplasmic-facing; that stretch reads SGISYLFPDLPNTSS. Residues 237–257 form a helical membrane-spanning segment; sequence TLVVTVIMMMLVATLTTVIGI. Residues 258–272 lie on the Cytoplasmic side of the membrane; it reads EKGLAWLSRINLRLL. The helical transmembrane segment at 273–293 threads the bilayer; sequence YLLLLFVFLTGPTNHLLNGLV. The Periplasmic segment spans residues 294–323; that stretch reads QNTGDYLSHFVQKSFDLYLYDKNATGWLAS. The helical transmembrane segment at 324-344 threads the bilayer; sequence WTIFYWAWWIAWAPFVGMFIA. Topologically, residues 345-354 are cytoplasmic; it reads RISKGRTIRE. Residues 355 to 375 form a helical membrane-spanning segment; sequence VVLGVCLIPLGFTLAWISIFG. At 376-417 the chain is on the periplasmic side; sequence NTAIDLILNHGQQIIGSLVIQDPALSLFKLLEYLPFHPYVAG. A helical transmembrane segment spans residues 418–438; sequence IVVVICFVLFLTPVGSGTLMI. Residues 439–457 lie on the Cytoplasmic side of the membrane; the sequence is ANLSSQGGSSDSDSPIWLR. A helical transmembrane segment spans residues 458–478; sequence VFWSIAITIVSIGLLLAGSFS. Residues 479–482 lie on the Periplasmic side of the membrane; sequence AMQS. A helical transmembrane segment spans residues 483–503; it reads AVVLCGLPFSVILLLYMFGLA. Topologically, residues 504–526 are cytoplasmic; that stretch reads KALKQETQQPVVESHTTETSGSD.

The protein belongs to the BCCT transporter (TC 2.A.15) family.

It localises to the cell inner membrane. Its function is as follows. Sodium-independent high-affinity choline uptake system. Uptake is not proton coupled. May play a role in metabolic adaptation to choline-containing environments. The sequence is that of Osmo-independent choline transporter BetT1 from Acinetobacter baylyi (strain ATCC 33305 / BD413 / ADP1).